We begin with the raw amino-acid sequence, 409 residues long: Nucleoprotein (409 aa).

Disordered regions lie at residues 1–32, 46–69, 120–193, and 238–259; these read MASG…SSGN, SPPL…QQHG, GADT…SGAE, and VDQV…DKMN. Residues 15 to 31 are compositionally biased toward low complexity; it reads PVIKLGGPKPPKVGSSG. The interval 29 to 160 is RNA-binding; the sequence is SSGNASWFQA…GNFRWDFIPL (132 aa). One can recognise a CoV N NTD domain in the interval 31-156; the sequence is GNASWFQAIK…GGPDGNFRWD (126 aa). The span at 162–179 shows a compositional bias: low complexity; it reads RGRSGKSTAASSAASSRA. 2 stretches are compositionally biased toward basic and acidic residues: residues 180 to 192 and 247 to 259; these read PSRE…RSGA and KGKE…DKMN. S190 bears the Phosphoserine; by host mark. Residues 215–331 enclose the CoV N CTD domain; it reads TKAKADEMAH…QCVDGVGTRP (117 aa). The dimerization stretch occupies residues 226–333; that stretch reads RYCKRTIPPG…VDGVGTRPKD (108 aa). C320 and C323 are disulfide-bonded. Residues 327–409 are disordered; the sequence is VGTRPKDDEP…GDSALGENEL (83 aa). The span at 341-354 shows a compositional bias: low complexity; the sequence is RSSSRPATRTSSPA. Residues 358 to 367 show a composition bias toward basic residues; that stretch reads PRPKKEKKTK. Basic and acidic residues predominate over residues 368–384; the sequence is KQDDEVDKALTSDEERN. Position 378 is a phosphothreonine; by host (T378). Residue S379 is modified to Phosphoserine; by host.

It belongs to the gammacoronavirus nucleocapsid protein family. Homooligomer. Both monomeric and oligomeric forms interact with RNA. Interacts with protein M. Interacts with NSP3; this interaction serves to tether the genome to the newly translated replicase-transcriptase complex at a very early stage of infection. ADP-ribosylated. The ADP-ribosylation is retained in the virion during infection. Post-translationally, phosphorylated on serine and threonine residues.

It localises to the virion. The protein localises to the host endoplasmic reticulum-Golgi intermediate compartment. It is found in the host Golgi apparatus. Its function is as follows. Packages the positive strand viral genome RNA into a helical ribonucleocapsid (RNP) and plays a fundamental role during virion assembly through its interactions with the viral genome and membrane protein M. Plays an important role in enhancing the efficiency of subgenomic viral RNA transcription as well as viral replication. The protein is Nucleoprotein of Gallus gallus (Chicken).